Consider the following 310-residue polypeptide: Fucose-specific lectin (310 aa).

Repeat copies occupy residues 1–53, 54–103, 104–151, 152–209, 210–256, and 257–310. Residues 1 to 310 are 6 X approximate tandem repeats; the sequence is MSTPGAQEVL…LGRRALPPAE (310 aa). Residues R25, E37, W44, R73, E85, W94, R126, E138, W146, R177, Q189, W198, R230, Q242, R277, and E291 each contribute to the beta-L-fucose site.

It belongs to the fungal fucose-specific lectin family.

Its function is as follows. Lectin that specifically binds to L-fucose and weakly reacts with mannose and N-acetyl-neuraminic acid. Has strongest preference for the alpha-1,6-fucosylated chain (core fucose) on glycoproteins among alpha-1,2-, alpha-1,3-, alpha-1,4-, and alpha-1,6-fucosylated chains. Binds to fucose residues of IgE in mice and human, causing antigen-independent IgE-mediated mast cell activation and anaphylactoid reactions in mice and is possibly implicated in allergic response to Aspergillus oryzae in humans. Induces secretion of pro-inflammatory cytokines IL6 and IL8 implicated in ocular diseases such as mycotic keratitis, probably through its interaction with host toll-like receptors TLR2 and TLR4, followed by up-regulation of pro-inflammatory cytokines. The protein is Fucose-specific lectin of Aspergillus oryzae (Yellow koji mold).